The sequence spans 483 residues: Chromatin structure-remodeling complex protein RSC6 (483 aa).

Disordered stretches follow at residues 142-183 (KRKR…EAES) and 273-309 (AQDG…DKPE). The span at 148-158 (SLSLPLNLQQP) shows a compositional bias: low complexity. The segment covering 171–180 (DNGEDEDSAE) has biased composition (acidic residues).

To yeast SNF12. Interacts directly with RSC8. Component of the two forms of the RSC complex composed of at least either RSC1 or RSC2, and ARP7, ARP9, LDB7, NPL6, RSC3, RSC30, RSC4, RSC58, RSC6, RSC8, RSC9, SFH1, STH1, HTL1 and probably RTT102. The complexes interact with histone and histone variant components of centromeric chromatin.

It localises to the nucleus. Functionally, component of the chromatin structure-remodeling complex (RSC), which is involved in transcription regulation and nucleosome positioning. RSC is responsible for the transfer of a histone octamer from a nucleosome core particle to naked DNA. The reaction requires ATP and involves an activated RSC-nucleosome intermediate. Remodeling reaction also involves DNA translocation, DNA twist and conformational change. As a reconfigurer of centromeric and flanking nucleosomes, RSC complex is required both for proper kinetochore function in chromosome segregation and, via a PKC1-dependent signaling pathway, for organization of the cellular cytoskeleton. This subunit is essential for mitotic growth and suppresses formamide sensitivity of the RSC8 mutants. The polypeptide is Chromatin structure-remodeling complex protein RSC6 (RSC6) (Saccharomyces cerevisiae (strain ATCC 204508 / S288c) (Baker's yeast)).